The chain runs to 282 residues: Formamidopyrimidine-DNA glycosylase (282 aa).

The active-site Schiff-base intermediate with DNA is P2. Catalysis depends on E3, which acts as the Proton donor. Residue K60 is the Proton donor; for beta-elimination activity of the active site. Residues H99, R118, and R163 each coordinate DNA. The FPG-type zinc-finger motif lies at 248–282; sequence WVYGRTGEPCRVCGTSIERLKLGGRSAHFCPRCQA. The active-site Proton donor; for delta-elimination activity is R272.

This sequence belongs to the FPG family. Monomer. The cofactor is Zn(2+).

The catalysed reaction is Hydrolysis of DNA containing ring-opened 7-methylguanine residues, releasing 2,6-diamino-4-hydroxy-5-(N-methyl)formamidopyrimidine.. It carries out the reaction 2'-deoxyribonucleotide-(2'-deoxyribose 5'-phosphate)-2'-deoxyribonucleotide-DNA = a 3'-end 2'-deoxyribonucleotide-(2,3-dehydro-2,3-deoxyribose 5'-phosphate)-DNA + a 5'-end 5'-phospho-2'-deoxyribonucleoside-DNA + H(+). Functionally, involved in base excision repair of DNA damaged by oxidation or by mutagenic agents. Acts as a DNA glycosylase that recognizes and removes damaged bases. Has a preference for oxidized purines, such as 7,8-dihydro-8-oxoguanine (8-oxoG). Has AP (apurinic/apyrimidinic) lyase activity and introduces nicks in the DNA strand. Cleaves the DNA backbone by beta-delta elimination to generate a single-strand break at the site of the removed base with both 3'- and 5'-phosphates. In Rippkaea orientalis (strain PCC 8801 / RF-1) (Cyanothece sp. (strain PCC 8801)), this protein is Formamidopyrimidine-DNA glycosylase.